Here is a 634-residue protein sequence, read N- to C-terminus: Protein IcfG (634 aa).

The HAMP domain maps to 306-361; the sequence is HHSTVPILDLTKASQAIAAGDLDYEININQGNRQDEIGILGNSFIYMKNQIKTLIA. The region spanning 385-633 is the PPM-type phosphatase domain; that stretch reads PISLPDLQQW…DDITMIAVYR (249 aa).

Involved in cross-regulation of inorganic carbon and glucose metabolisms. The polypeptide is Protein IcfG (icfG) (Synechocystis sp. (strain ATCC 27184 / PCC 6803 / Kazusa)).